The following is a 164-amino-acid chain: V-type proton ATPase subunit c' (164 aa).

Residues 1–16 lie on the Lumenal side of the membrane; that stretch reads MDMVASDNVYAPLYAP. A helical membrane pass occupies residues 17–37; the sequence is FFGFAGCALAMILSCLGAAIG. Residues 38–59 are Cytoplasmic-facing; the sequence is TAKSGIGIAGIGTFKPELIMKS. The helical transmembrane segment at 60 to 80 threads the bilayer; sequence LIPVVMSGILAIYGLVVAVLI. The Lumenal portion of the chain corresponds to 81 to 98; sequence AGNLSPTEEYTLFNGFMH. Residues 99–119 traverse the membrane as a helical segment; the sequence is LSCGLCVGFACLSSGYAIGIV. The Cytoplasmic portion of the chain corresponds to 120-136; it reads GDVGVRKYMHQPRLFVG. A helical transmembrane segment spans residues 137–157; sequence IVLILIFSEVLGLYGMIIALI. Over 158–164 the chain is Lumenal; it reads LNTKGSE.

Belongs to the V-ATPase proteolipid subunit family. V-ATPase is a heteromultimeric enzyme composed of a peripheral catalytic V1 complex (components A to H) attached to an integral membrane V0 proton pore complex (components: a, c, c', c'', d, e, f and VOA1). The decameric c-ring forms the proton-conducting pore, and is composed of eight proteolipid subunits c, one subunit c' and one subunit c''.

It is found in the vacuole membrane. Proton-conducting pore forming subunit of the V0 complex of vacuolar(H+)-ATPase (V-ATPase), a multisubunit enzyme composed of a peripheral complex (V1) that hydrolyzes ATP and a membrane integral complex (V0) that translocates protons. V-ATPase is responsible for acidifying and maintaining the pH of intracellular compartments. The polypeptide is V-type proton ATPase subunit c' (VMA11) (Candida glabrata (strain ATCC 2001 / BCRC 20586 / JCM 3761 / NBRC 0622 / NRRL Y-65 / CBS 138) (Yeast)).